A 161-amino-acid chain; its full sequence is Vitamin K-dependent protein C (161 aa).

Residues 1–161 (EKWELDLDIE…GCGLLHNYGV (161 aa)) enclose the Peptidase S1 domain. Asn17 is a glycosylation site (N-linked (GlcNAc...) asparagine). The Charge relay system role is filled by Asp26. N-linked (GlcNAc...) asparagine glycosylation is present at Asn82. Cystine bridges form between Cys100–Cys114 and Cys125–Cys153. Ser129 (charge relay system) is an active-site residue.

Belongs to the peptidase S1 family. In terms of tissue distribution, plasma; synthesized in the liver.

The protein localises to the secreted. The protein resides in the golgi apparatus. Its subcellular location is the endoplasmic reticulum. It catalyses the reaction Degradation of blood coagulation factors Va and VIIIa.. In terms of biological role, protein C is a vitamin K-dependent serine protease that regulates blood coagulation by inactivating factors Va and VIIIa in the presence of calcium ions and phospholipids. Exerts a protective effect on the endothelial cell barrier function. This Macaca mulatta (Rhesus macaque) protein is Vitamin K-dependent protein C (PROC).